The sequence spans 308 residues: Probable GTP 3',8-cyclase (308 aa).

The Radical SAM core domain occupies 4–222; sequence RFGRPLEDLR…KKLIRKKHFR (219 aa). GTP is bound at residue arginine 13. 3 residues coordinate [4Fe-4S] cluster: cysteine 20, cysteine 24, and cysteine 27. Position 60 (lysine 60) interacts with GTP. Glycine 64 provides a ligand contact to S-adenosyl-L-methionine. Threonine 90 is a GTP binding site. Serine 114 lines the S-adenosyl-L-methionine pocket. Residue lysine 151 participates in GTP binding. Residues cysteine 245 and cysteine 248 each contribute to the [4Fe-4S] cluster site. 250–252 contacts GTP; the sequence is RIR. A [4Fe-4S] cluster-binding site is contributed by cysteine 262.

The protein belongs to the radical SAM superfamily. MoaA family. [4Fe-4S] cluster is required as a cofactor.

It carries out the reaction GTP + AH2 + S-adenosyl-L-methionine = (8S)-3',8-cyclo-7,8-dihydroguanosine 5'-triphosphate + 5'-deoxyadenosine + L-methionine + A + H(+). It participates in cofactor biosynthesis; molybdopterin biosynthesis. Catalyzes the cyclization of GTP to (8S)-3',8-cyclo-7,8-dihydroguanosine 5'-triphosphate. The polypeptide is Probable GTP 3',8-cyclase (Saccharolobus solfataricus (strain ATCC 35092 / DSM 1617 / JCM 11322 / P2) (Sulfolobus solfataricus)).